Here is a 382-residue protein sequence, read N- to C-terminus: ATP phosphoribosyltransferase regulatory subunit (382 aa).

The protein belongs to the class-II aminoacyl-tRNA synthetase family. HisZ subfamily. Heteromultimer composed of HisG and HisZ subunits.

Its subcellular location is the cytoplasm. The protein operates within amino-acid biosynthesis; L-histidine biosynthesis; L-histidine from 5-phospho-alpha-D-ribose 1-diphosphate: step 1/9. Functionally, required for the first step of histidine biosynthesis. May allow the feedback regulation of ATP phosphoribosyltransferase activity by histidine. This is ATP phosphoribosyltransferase regulatory subunit from Burkholderia pseudomallei (strain 668).